The sequence spans 290 residues: 6-phospho-5-dehydro-2-deoxy-D-gluconate aldolase (290 aa).

The Proton donor role is filled by aspartate 85. Positions 86 and 180 each coordinate Zn(2+). Glycine 181 is a binding site for dihydroxyacetone phosphate. A Zn(2+)-binding site is contributed by histidine 208. Dihydroxyacetone phosphate is bound by residues 209–211 (GAS) and 230–233 (NINT). Threonine 233 carries the post-translational modification Phosphothreonine.

The protein belongs to the class II fructose-bisphosphate aldolase family. IolJ subfamily. Zn(2+) serves as cofactor.

It carries out the reaction 6-phospho-5-dehydro-2-deoxy-D-gluconate = 3-oxopropanoate + dihydroxyacetone phosphate. It participates in polyol metabolism; myo-inositol degradation into acetyl-CoA; acetyl-CoA from myo-inositol: step 6/7. Functionally, produces dihydroxyacetone phosphate (DHAP or glycerone phosphate) and malonic semialdehyde (MSA or 3-oxopropanoate) from 6-phospho-5-dehydro-2-deoxy-D-gluconate (DKGP). The sequence is that of 6-phospho-5-dehydro-2-deoxy-D-gluconate aldolase (iolJ) from Bacillus subtilis (strain 168).